The sequence spans 295 residues: Acetyl-coenzyme A carboxylase carboxyl transferase subunit beta (295 aa).

Residues 1–20 are disordered; that stretch reads MSWLSKLMPSGIRTENTPAK. One can recognise a CoA carboxyltransferase N-terminal domain in the interval 28 to 295; the sequence is LWEKCSNCGS…QPHPQDADAA (268 aa). Zn(2+) contacts are provided by Cys-32, Cys-35, Cys-51, and Cys-54. The segment at 32–54 adopts a C4-type zinc-finger fold; that stretch reads CSNCGSALYGPELEENLEVCPKC.

This sequence belongs to the AccD/PCCB family. In terms of assembly, acetyl-CoA carboxylase is a heterohexamer composed of biotin carboxyl carrier protein (AccB), biotin carboxylase (AccC) and two subunits each of ACCase subunit alpha (AccA) and ACCase subunit beta (AccD). Zn(2+) is required as a cofactor.

It is found in the cytoplasm. It carries out the reaction N(6)-carboxybiotinyl-L-lysyl-[protein] + acetyl-CoA = N(6)-biotinyl-L-lysyl-[protein] + malonyl-CoA. It functions in the pathway lipid metabolism; malonyl-CoA biosynthesis; malonyl-CoA from acetyl-CoA: step 1/1. Its function is as follows. Component of the acetyl coenzyme A carboxylase (ACC) complex. Biotin carboxylase (BC) catalyzes the carboxylation of biotin on its carrier protein (BCCP) and then the CO(2) group is transferred by the transcarboxylase to acetyl-CoA to form malonyl-CoA. This chain is Acetyl-coenzyme A carboxylase carboxyl transferase subunit beta, found in Xanthomonas euvesicatoria pv. vesicatoria (strain 85-10) (Xanthomonas campestris pv. vesicatoria).